Reading from the N-terminus, the 98-residue chain is uncharacterized protein (98 aa).

The disordered stretch occupies residues 1 to 63 (MPRDKKLVHR…NGHSQPAIVA (63 aa)). Residues 14-29 (DVEDEDNDQREEEWSD) show a composition bias toward acidic residues. The segment covering 48–57 (EPSSASNGHS) has biased composition (polar residues).

This is an uncharacterized protein from Aedes vexans (Inland floodwater mosquito).